The sequence spans 516 residues: MASLMEVQVPLLGMGTTMGALALALVVVVVVHVAVNAFGRRRLPPSPASLPVIGHLHLLRPPVHRTFHELAARLGPLMHVRLGSTHCVVASSAEVAAELIRSHEAKISERPLTAVARQFAYESAGFAFAPYSPHWRFMKRLCMSELLGPRTVEQLRPVRRAGLVSLLRHVLSQPEAEAVDLTRELIRMSNTSIIRMAASTVPSSVTEEAQELVKVVAELVGAFNADDYIALCRGWDLQGLGRRAADVHKRFDALLEEMIRHKEEARMRKKTDTDVGSKDLLDILLDKAEDGAAEVKLTRDNIKAFIIDVVTAGSDTSAAMVEWMVAELMNHPEALRKVREEIEAVVGRDRIAGEGDLPRLPYLQAAYKETLRLRPAAPIAHRQSTEEIQIRGFRVPAQTAVFINVWAIGRDPAYWEEPLEFRPERFLAGGGGEGVEPRGQHFQFMPFGSGRRGCPGMGLALQSVPAVVAALLQCFDWQCMDNKLIDMEEADGLVCARKHRLLLHAHPRLHPFPPLL.

A helical transmembrane segment spans residues 11–31 (LLGMGTTMGALALALVVVVVV). Cys-454 serves as a coordination point for heme.

Belongs to the cytochrome P450 family. Heme is required as a cofactor.

It localises to the membrane. It catalyses the reaction a flavanone + reduced [NADPH--hemoprotein reductase] + O2 = a flavone + oxidized [NADPH--hemoprotein reductase] + 2 H2O + H(+). The protein operates within secondary metabolite biosynthesis; flavonoid biosynthesis. Its function is as follows. Functions as a flavone synthase II (FNSII) that catalyzes the direct conversion of flavanones to flavones. In vitro, can convert naringenin and eriodictyol to apigenin and luteolin, respectively. Acts as a key branch point enzyme that channels flavanones to the biosynthesis of soluble tricin O-linked conjugates. The polypeptide is Cytochrome P450 93G1 (Oryza sativa subsp. japonica (Rice)).